We begin with the raw amino-acid sequence, 512 residues long: ATP synthase subunit alpha (512 aa).

169 to 176 (GDRQTGKT) contributes to the ATP binding site.

This sequence belongs to the ATPase alpha/beta chains family. As to quaternary structure, F-type ATPases have 2 components, CF(1) - the catalytic core - and CF(0) - the membrane proton channel. CF(1) has five subunits: alpha(3), beta(3), gamma(1), delta(1), epsilon(1). CF(0) has three main subunits: a(1), b(2) and c(9-12). The alpha and beta chains form an alternating ring which encloses part of the gamma chain. CF(1) is attached to CF(0) by a central stalk formed by the gamma and epsilon chains, while a peripheral stalk is formed by the delta and b chains.

It localises to the cell inner membrane. It catalyses the reaction ATP + H2O + 4 H(+)(in) = ADP + phosphate + 5 H(+)(out). Functionally, produces ATP from ADP in the presence of a proton gradient across the membrane. The alpha chain is a regulatory subunit. In Aromatoleum aromaticum (strain DSM 19018 / LMG 30748 / EbN1) (Azoarcus sp. (strain EbN1)), this protein is ATP synthase subunit alpha.